Reading from the N-terminus, the 366-residue chain is Flagellar P-ring protein (366 aa).

The signal sequence occupies residues 1-22 (MFTRKSVILMAVLLIWSAVSYA).

This sequence belongs to the FlgI family. The basal body constitutes a major portion of the flagellar organelle and consists of four rings (L,P,S, and M) mounted on a central rod.

It is found in the periplasm. The protein localises to the bacterial flagellum basal body. Assembles around the rod to form the L-ring and probably protects the motor/basal body from shearing forces during rotation. In Hydrogenovibrio crunogenus (strain DSM 25203 / XCL-2) (Thiomicrospira crunogena), this protein is Flagellar P-ring protein.